Reading from the N-terminus, the 441-residue chain is DNA double-strand break repair protein Mre11 (441 aa).

4 residues coordinate Mn(2+): aspartate 9, histidine 11, aspartate 50, and asparagine 85. Histidine 86 acts as the Proton donor in catalysis. Mn(2+) contacts are provided by histidine 150, aspartate 181, and histidine 183. The segment at 360–441 (ESLLSDDPDA…SRDSSLGDFA (82 aa)) is disordered. Composition is skewed to acidic residues over residues 379–403 (AEAE…EDTA) and 411–425 (TDTD…DSET).

The protein belongs to the MRE11/RAD32 family. In terms of assembly, homodimer. Forms a heterotetramer composed of two Mre11 subunits and two Rad50 subunits. Requires Mn(2+) as cofactor.

Nuclease activity is regulated by Rad50. Part of the Rad50/Mre11 complex, which is involved in the early steps of DNA double-strand break (DSB) repair. Mre11 binds to DSB ends and has both double-stranded 3'-5' exonuclease activity and single-stranded endonuclease activity. In polyploid organisms, the Rad50/Mre11 complex appears to restrain the repair of double-strand breaks by homologous recombination, allowing another pathway to act as the primary mode of repair. In Haloferax volcanii (strain ATCC 29605 / DSM 3757 / JCM 8879 / NBRC 14742 / NCIMB 2012 / VKM B-1768 / DS2) (Halobacterium volcanii), this protein is DNA double-strand break repair protein Mre11.